We begin with the raw amino-acid sequence, 454 residues long: Bifunctional protein GlmU (454 aa).

The pyrophosphorylase stretch occupies residues 1–226; sequence MSLDIVILAA…AMEVQGANDR (226 aa). UDP-N-acetyl-alpha-D-glucosamine contacts are provided by residues 8–11, K22, Q73, 78–79, 99–101, G136, E151, N166, and N224; these read LAAG, GT, and YGD. D101 is a Mg(2+) binding site. Residue N224 participates in Mg(2+) binding. The segment at 227–247 is linker; the sequence is LQLAQLERHYQSRVARRLMAQ. Residues 248-454 form an N-acetyltransferase region; sequence GVTLRDPARF…GWQRPTKQKK (207 aa). UDP-N-acetyl-alpha-D-glucosamine-binding residues include R330 and K348. The active-site Proton acceptor is the H360. Residues Y363 and N374 each contribute to the UDP-N-acetyl-alpha-D-glucosamine site. Acetyl-CoA contacts are provided by residues A377, 383–384, S402, A420, and R437; that span reads NY.

This sequence in the N-terminal section; belongs to the N-acetylglucosamine-1-phosphate uridyltransferase family. It in the C-terminal section; belongs to the transferase hexapeptide repeat family. As to quaternary structure, homotrimer. It depends on Mg(2+) as a cofactor.

It localises to the cytoplasm. The enzyme catalyses alpha-D-glucosamine 1-phosphate + acetyl-CoA = N-acetyl-alpha-D-glucosamine 1-phosphate + CoA + H(+). It carries out the reaction N-acetyl-alpha-D-glucosamine 1-phosphate + UTP + H(+) = UDP-N-acetyl-alpha-D-glucosamine + diphosphate. Its pathway is nucleotide-sugar biosynthesis; UDP-N-acetyl-alpha-D-glucosamine biosynthesis; N-acetyl-alpha-D-glucosamine 1-phosphate from alpha-D-glucosamine 6-phosphate (route II): step 2/2. It functions in the pathway nucleotide-sugar biosynthesis; UDP-N-acetyl-alpha-D-glucosamine biosynthesis; UDP-N-acetyl-alpha-D-glucosamine from N-acetyl-alpha-D-glucosamine 1-phosphate: step 1/1. It participates in bacterial outer membrane biogenesis; LPS lipid A biosynthesis. Its function is as follows. Catalyzes the last two sequential reactions in the de novo biosynthetic pathway for UDP-N-acetylglucosamine (UDP-GlcNAc). The C-terminal domain catalyzes the transfer of acetyl group from acetyl coenzyme A to glucosamine-1-phosphate (GlcN-1-P) to produce N-acetylglucosamine-1-phosphate (GlcNAc-1-P), which is converted into UDP-GlcNAc by the transfer of uridine 5-monophosphate (from uridine 5-triphosphate), a reaction catalyzed by the N-terminal domain. In Azotobacter vinelandii (strain DJ / ATCC BAA-1303), this protein is Bifunctional protein GlmU.